Reading from the N-terminus, the 372-residue chain is tRNA-specific 2-thiouridylase MnmA (372 aa).

ATP-binding positions include 11–18 and Met-37; that span reads GMSGGVDS. The interaction with target base in tRNA stretch occupies residues 97–99; that stretch reads NPD. Cys-102 (nucleophile) is an active-site residue. Cys-102 and Cys-199 are disulfide-bonded. Gly-126 provides a ligand contact to ATP. The tract at residues 149-151 is interaction with tRNA; the sequence is KDQ. The active-site Cysteine persulfide intermediate is the Cys-199. Residues 309–310 are interaction with tRNA; it reads RY.

Belongs to the MnmA/TRMU family.

It is found in the cytoplasm. The catalysed reaction is S-sulfanyl-L-cysteinyl-[protein] + uridine(34) in tRNA + AH2 + ATP = 2-thiouridine(34) in tRNA + L-cysteinyl-[protein] + A + AMP + diphosphate + H(+). In terms of biological role, catalyzes the 2-thiolation of uridine at the wobble position (U34) of tRNA, leading to the formation of s(2)U34. The protein is tRNA-specific 2-thiouridylase MnmA of Staphylococcus aureus (strain USA300).